We begin with the raw amino-acid sequence, 530 residues long: ATP-dependent 6-phosphofructokinase 4, chloroplastic (530 aa).

The N-terminal 54 residues, 1–54 (MEASISFLGSTKPNISLFNPSSNVLPRRDFPLPALKLKKVSVLPRILHQKRLIR), are a transit peptide targeting the chloroplast. Serine 121 is subject to Phosphoserine. ATP-binding positions include glycine 152, 215–216 (RG), and 240–243 (GGGT). Residues 269 to 271 (TID), 314 to 316 (MGR), glutamate 370, and 427 to 430 (YMIR) each bind substrate. Residue aspartate 271 is the Proton acceptor of the active site.

It belongs to the phosphofructokinase type A (PFKA) family. PPi-dependent PFK group II subfamily. Atypical ATP-dependent clade 'X' sub-subfamily. In terms of assembly, homotetramer. It depends on Mg(2+) as a cofactor. Expressed in leaves, stems and flowers.

It localises to the plastid. It is found in the chloroplast. The enzyme catalyses beta-D-fructose 6-phosphate + ATP = beta-D-fructose 1,6-bisphosphate + ADP + H(+). It participates in carbohydrate degradation; glycolysis; D-glyceraldehyde 3-phosphate and glycerone phosphate from D-glucose: step 3/4. Allosterically activated by AMP. In terms of biological role, catalyzes the phosphorylation of D-fructose 6-phosphate to fructose 1,6-bisphosphate by ATP, the first committing step of glycolysis. This is ATP-dependent 6-phosphofructokinase 4, chloroplastic from Arabidopsis thaliana (Mouse-ear cress).